Here is a 121-residue protein sequence, read N- to C-terminus: Heme-degrading monooxygenase (121 aa).

In terms of domain architecture, ABM spans 2 to 101 (IIVTNTIKVE…EQREDRKGIV (100 aa)). Position 6 (N6) interacts with Fe cation. Residues 76-98 (KSDSFKKAHGRTKDTREQREDRK) are disordered. The span at 78 to 98 (DSFKKAHGRTKDTREQREDRK) shows a compositional bias: basic and acidic residues. H84 provides a ligand contact to heme.

The protein belongs to the antibiotic biosynthesis monooxygenase family. Heme-degrading monooxygenase IsdG subfamily. Homodimer.

It is found in the cytoplasm. It carries out the reaction heme b + 3 reduced [NADPH--hemoprotein reductase] + 3 O2 = biliverdin IXalpha + CO + Fe(2+) + 3 oxidized [NADPH--hemoprotein reductase] + 3 H2O + H(+). Functionally, allows bacterial pathogens to use the host heme as an iron source. Catalyzes the oxidative degradation of the heme macrocyclic porphyrin ring to the biliverdin in the presence of a suitable electron donor such as ascorbate or NADPH--cytochrome P450 reductase, with subsequent release of free iron. In Listeria innocua serovar 6a (strain ATCC BAA-680 / CLIP 11262), this protein is Heme-degrading monooxygenase.